The sequence spans 451 residues: Interferon regulatory factor 4 (451 aa).

A DNA-binding region (IRF tryptophan pentad repeat) is located at residues 21-129 (NGKLRQWLID…DPYKVYRIVP (109 aa)). 2 positions are modified to phosphoserine; by ROCK2: Ser-447 and Ser-448.

Belongs to the IRF family. Interacts with the BATF-JUNB heterodimer. Interacts with BATF (via bZIP domain); the interaction is direct. Interacts with SPIB. Interacts with DEF6. Directly interacts with NLRP3 in the nucleus of Th2 cells; this interaction enhances IRF4 ability to bind to the IL4 promoter and is required for optimal IRF4-dependent IL4 transcription. Interacts with SPI1. Post-translationally, phosphorylation by ROCK2 regulates IL-17 and IL-21 production. In terms of tissue distribution, lymphoid cells.

The protein localises to the nucleus. It localises to the cytoplasm. Its function is as follows. Transcriptional activator. Binds to the interferon-stimulated response element (ISRE) of the MHC class I promoter. Binds the immunoglobulin lambda light chain enhancer, together with PU.1. Probably plays a role in ISRE-targeted signal transduction mechanisms specific to lymphoid cells. Involved in CD8(+) dendritic cell differentiation by forming a complex with the BATF-JUNB heterodimer in immune cells, leading to recognition of AICE sequence (5'-TGAnTCA/GAAA-3'), an immune-specific regulatory element, followed by cooperative binding of BATF and IRF4 and activation of genes. This is Interferon regulatory factor 4 from Homo sapiens (Human).